Consider the following 265-residue polypeptide: MRQPAVAGQFYPLRPDNLEKELKQCFEGLEIRERNILGAVCPHAGYVYSGRVAAHVYAVLPKADTYVLFGPNHTGYGSPVSVSTDTWKTPLGIIEVDRELAEGLTGSIVDVDEIGHRYEHSIEVQLPFLQYRFDQDFRILPICLGMQDEETVIEVGTLIANLVSKSGKKVAFIASSDFTHYQPANLARETDNEIIEAILNLDVPGIYERLYRRNASVCGYGPISAMLTASKKLGATRAELLNYSNSGEVSGDMNAVVGYAAIIVE.

It belongs to the MEMO1 family.

The polypeptide is MEMO1 family protein Mbar_A1422 (Methanosarcina barkeri (strain Fusaro / DSM 804)).